A 938-amino-acid polypeptide reads, in one-letter code: Probable glutamyl endopeptidase, chloroplastic (938 aa).

A chloroplast-targeting transit peptide spans 1–54 (MSSLTILLQRACLRFALLPVPPLRAPLRPPRRPLGLPRRSAMSSSAASRLSHIV). The span at 58-76 (GGAAGESSEPPAAAAAASG) shows a compositional bias: low complexity. A disordered region spans residues 58-77 (GGAAGESSEPPAAAAAASGL). Catalysis depends on charge relay system residues S762, D836, and H870. Polar residues predominate over residues 897 to 913 (SSKTDSDSVADTENKTV). Residues 897-938 (SSKTDSDSVADTENKTVSASGGGAPCEGPEAEGFSSMQRSLL) form a disordered region.

The protein belongs to the peptidase S9D family.

It is found in the plastid. The protein resides in the chloroplast stroma. In terms of biological role, serine-type protease active in vitro against the LHCII N-terminal. Cleaves its substrate on the carboxy-side of Glu residues. In Oryza sativa subsp. japonica (Rice), this protein is Probable glutamyl endopeptidase, chloroplastic (GEP).